Here is a 683-residue protein sequence, read N- to C-terminus: Outer dynein arm-docking complex subunit 4 (683 aa).

4 TPR repeats span residues 13 to 46 (FPSY…QSGD), 47 to 80 (KNCL…DPTF), 48 to 80 (NCLV…DPTF), and 81 to 114 (CKGI…RPDR). Residues 158–179 (QQKPHPVRQLIHHPKRESKRKG) are disordered. Residues 167-179 (LIHHPKRESKRKG) are compositionally biased toward basic residues. 5 TPR repeats span residues 275-311 (LKSL…NKEE), 320-353 (GNLY…AKEY), 360-393 (SRAL…AKTT), 397-430 (TWLF…AEEE), and 437-470 (LNAS…AKLV). 2 disordered regions span residues 510-537 (ENAT…PEKV) and 553-683 (VLSK…EPIE). Basic and acidic residues-rich tracts occupy residues 521–537 (TAKE…PEKV), 566–590 (PEQR…ERGP), 602–620 (GRTE…RPSE), and 629–675 (SSPR…IEKD). One copy of the TPR 15 repeat lies at 592–625 (DTAKGQFGEAGRTEQNREETREIYRRPSELDQNL).

As to quaternary structure, component of the outer dynein arm-docking complex along with ODAD1, ODAD2 and ODAD3. Interacts with ODAD1; this interaction may facilitate the recruitment and/or attachment of outer dynein arm docking complex proteins, including ODAD1, ODAD3 and ODAD2, to ciliary axonemes. Interacts with components of the IFT complex A, including IFT140, TTC21B/IFT139 and WDR19/IFT144, and the IFT complex B, including IFT46, IFT52 and IFT57. Interacts with CFAP53. As to expression, expressed in trachea multiciliated cells.

The protein localises to the cytoplasm. The protein resides in the cytoskeleton. Its subcellular location is the cilium axoneme. Component of the outer dynein arm-docking complex (ODA-DC) that mediates outer dynein arms (ODA) binding onto the doublet microtubule. Plays an essential role for the assembly of ODA-DC and for the docking of ODA in ciliary axoneme. The polypeptide is Outer dynein arm-docking complex subunit 4 (Bos taurus (Bovine)).